The primary structure comprises 353 residues: GTPase Obg (353 aa).

The 159-residue stretch at 1–159 folds into the Obg domain; that stretch reads MKFLDEAKVY…RWIWLRLKLI (159 aa). Positions 160-327 constitute an OBG-type G domain; that stretch reads ADAGLVGLPN…ALRALVAVIG (168 aa). GTP is bound by residues 166 to 173, 191 to 195, 212 to 215, 279 to 282, and 308 to 310; these read GLPNAGKS, FTTLH, DIPG, NKID, and SGV. The Mg(2+) site is built by Ser-173 and Thr-193.

The protein belongs to the TRAFAC class OBG-HflX-like GTPase superfamily. OBG GTPase family. As to quaternary structure, monomer. It depends on Mg(2+) as a cofactor.

It is found in the cytoplasm. Functionally, an essential GTPase which binds GTP, GDP and possibly (p)ppGpp with moderate affinity, with high nucleotide exchange rates and a fairly low GTP hydrolysis rate. Plays a role in control of the cell cycle, stress response, ribosome biogenesis and in those bacteria that undergo differentiation, in morphogenesis control. The sequence is that of GTPase Obg from Rhodopseudomonas palustris (strain ATCC BAA-98 / CGA009).